Consider the following 320-residue polypeptide: ATP-dependent 6-phosphofructokinase (320 aa).

G12 contacts ATP. Residue 22–26 coordinates ADP; that stretch reads RGVVR. Residues 73 to 74 and 103 to 106 contribute to the ATP site; these read RF and GDGS. D104 contacts Mg(2+). 126 to 128 contributes to the substrate binding site; it reads TID. Catalysis depends on D128, which acts as the Proton acceptor. R155 is an ADP binding site. Substrate is bound by residues R163 and 170-172; that span reads MGR. Residues 186–188, K212, and 214–216 contribute to the ADP site; these read GCE and KKH. Residues E223, R244, and 250 to 253 each bind substrate; that span reads HIQR.

Belongs to the phosphofructokinase type A (PFKA) family. ATP-dependent PFK group I subfamily. Prokaryotic clade 'B1' sub-subfamily. As to quaternary structure, homotetramer. Requires Mg(2+) as cofactor.

The protein localises to the cytoplasm. It carries out the reaction beta-D-fructose 6-phosphate + ATP = beta-D-fructose 1,6-bisphosphate + ADP + H(+). It participates in carbohydrate degradation; glycolysis; D-glyceraldehyde 3-phosphate and glycerone phosphate from D-glucose: step 3/4. Its activity is regulated as follows. Allosterically activated by ADP and other diphosphonucleosides, and allosterically inhibited by phosphoenolpyruvate. In terms of biological role, catalyzes the phosphorylation of D-fructose 6-phosphate to fructose 1,6-bisphosphate by ATP, the first committing step of glycolysis. The sequence is that of ATP-dependent 6-phosphofructokinase from Blochmanniella floridana.